A 95-amino-acid polypeptide reads, in one-letter code: MYRNEFTAWYRRMSVVYGIGTWSVLGSLLYYSRTMAKSSVDQKDGSASEVPSELSERPKGFYVETVVTYKEDFVPNTEKILNYWKSWTGGPGTEP.

The helical transmembrane segment at 13–35 threads the bilayer; sequence MSVVYGIGTWSVLGSLLYYSRTM.

This sequence belongs to the SMIM26 family. Interacts with AGK and SLC25A11. In terms of tissue distribution, detected in kidney (at protein level).

The protein localises to the mitochondrion outer membrane. Its function is as follows. May play a role in cell viability. The polypeptide is Small integral membrane protein 26 (Homo sapiens (Human)).